Reading from the N-terminus, the 437-residue chain is 3-phosphoshikimate 1-carboxyvinyltransferase (437 aa).

Positions 28, 29, and 33 each coordinate 3-phosphoshikimate. Lysine 28 lines the phosphoenolpyruvate pocket. Residues glycine 97 and arginine 125 each coordinate phosphoenolpyruvate. Residues serine 168, serine 169, glutamine 170, glutamate 316, and histidine 343 each coordinate 3-phosphoshikimate. Glutamine 170 is a phosphoenolpyruvate binding site. The Proton acceptor role is filled by glutamate 316. Phosphoenolpyruvate contacts are provided by arginine 347, arginine 388, and lysine 413.

This sequence belongs to the EPSP synthase family. As to quaternary structure, monomer.

Its subcellular location is the cytoplasm. The enzyme catalyses 3-phosphoshikimate + phosphoenolpyruvate = 5-O-(1-carboxyvinyl)-3-phosphoshikimate + phosphate. It participates in metabolic intermediate biosynthesis; chorismate biosynthesis; chorismate from D-erythrose 4-phosphate and phosphoenolpyruvate: step 6/7. Catalyzes the transfer of the enolpyruvyl moiety of phosphoenolpyruvate (PEP) to the 5-hydroxyl of shikimate-3-phosphate (S3P) to produce enolpyruvyl shikimate-3-phosphate and inorganic phosphate. The sequence is that of 3-phosphoshikimate 1-carboxyvinyltransferase from Rhodococcus erythropolis (strain PR4 / NBRC 100887).